The chain runs to 133 residues: Transcription antitermination protein NusB (133 aa).

It belongs to the NusB family.

Functionally, involved in transcription antitermination. Required for transcription of ribosomal RNA (rRNA) genes. Binds specifically to the boxA antiterminator sequence of the ribosomal RNA (rrn) operons. This chain is Transcription antitermination protein NusB, found in Clostridium botulinum (strain Alaska E43 / Type E3).